Reading from the N-terminus, the 221-residue chain is Proline-rich protein 20A (221 aa).

Disordered regions lie at residues 1 to 103 (MEEP…QRQG) and 137 to 174 (SLSE…GPQA). Residues 42 to 53 (PAQPAQPAKPIA) are compositionally biased toward low complexity. Pro residues predominate over residues 63 to 72 (PARPESPPPA). Residues 75–93 (GRRRGGSRRPGRGRGRRAG) are compositionally biased toward basic residues.

Belongs to the PRR20 family.

This is Proline-rich protein 20A (PRR20A) from Homo sapiens (Human).